The primary structure comprises 138 residues: Large ribosomal subunit protein uL16 (138 aa).

The span at 1–13 (MLQPSRRKFRKEQ) shows a compositional bias: basic residues. Residues 1–20 (MLQPSRRKFRKEQKGRNTGV) form a disordered region.

The protein belongs to the universal ribosomal protein uL16 family. In terms of assembly, part of the 50S ribosomal subunit.

Binds 23S rRNA and is also seen to make contacts with the A and possibly P site tRNAs. This chain is Large ribosomal subunit protein uL16, found in Leptothrix cholodnii (strain ATCC 51168 / LMG 8142 / SP-6) (Leptothrix discophora (strain SP-6)).